Reading from the N-terminus, the 189-residue chain is Peptidyl-tRNA hydrolase (189 aa).

Tyrosine 16 provides a ligand contact to tRNA. Histidine 21 functions as the Proton acceptor in the catalytic mechanism. TRNA-binding residues include phenylalanine 67, asparagine 69, and asparagine 115.

This sequence belongs to the PTH family. Monomer.

It localises to the cytoplasm. It catalyses the reaction an N-acyl-L-alpha-aminoacyl-tRNA + H2O = an N-acyl-L-amino acid + a tRNA + H(+). Its function is as follows. Hydrolyzes ribosome-free peptidyl-tRNAs (with 1 or more amino acids incorporated), which drop off the ribosome during protein synthesis, or as a result of ribosome stalling. Functionally, catalyzes the release of premature peptidyl moieties from peptidyl-tRNA molecules trapped in stalled 50S ribosomal subunits, and thus maintains levels of free tRNAs and 50S ribosomes. This is Peptidyl-tRNA hydrolase from Legionella pneumophila (strain Paris).